Consider the following 266-residue polypeptide: Norfluorocurarine synthase 1 (266 aa).

The region spanning 11–121 is the AB hydrolase-1 domain; the sequence is HFVLVHGAGH…VMPDAVNPPS (111 aa). Residues Ser86, Asp216, and His244 contribute to the active site.

Belongs to the AB hydrolase superfamily. In terms of assembly, homodimer.

The enzyme catalyses 17-dehydropreakuammicine + H2O = norfluorocurarine + methanol + CO2. The protein operates within alkaloid biosynthesis. In terms of biological role, hydrolase involved in the biosynthesis of curare monoterpene indole alkaloids (MIAs), natural products such as diaboline, a pharmacologically active compound used to regulate blood pressure. Curare alkaloids act as animal glycine receptor antagonists. Catalyzes the conversion of dehydropreakuammicine to norfluorocurarine. This Strychnos sp protein is Norfluorocurarine synthase 1.